Here is a 118-residue protein sequence, read N- to C-terminus: uncharacterized protein (118 aa).

The helical transmembrane segment at 95–115 (IIINLVIILAMYAPEIIGKLL) threads the bilayer.

This sequence belongs to the M.jannaschii MJ0023/MJ0349/MJ1072/MJ1074/MJ1107/MJECL16 family.

The protein resides in the membrane. This is an uncharacterized protein from Methanocaldococcus jannaschii (strain ATCC 43067 / DSM 2661 / JAL-1 / JCM 10045 / NBRC 100440) (Methanococcus jannaschii).